The chain runs to 83 residues: uncharacterized protein (83 aa).

The chain crosses the membrane as a helical span at residues 50-70 (IMVFLGEAWIILIPFAIFCII).

Belongs to the plectrovirus ORF7 family.

The protein localises to the host membrane. This is an uncharacterized protein from Spiroplasma melliferum (SpV1).